The sequence spans 377 residues: Queuine tRNA-ribosyltransferase (377 aa).

Aspartate 89 serves as the catalytic Proton acceptor. Residues 89 to 93, aspartate 143, glutamine 187, and glycine 214 contribute to the substrate site; that span reads DSGGF. Positions 245–251 are RNA binding; the sequence is GVGKPED. The active-site Nucleophile is aspartate 264. An RNA binding; important for wobble base 34 recognition region spans residues 269–273; it reads TRNAR. Residues cysteine 302, cysteine 304, cysteine 307, and histidine 333 each contribute to the Zn(2+) site.

Belongs to the queuine tRNA-ribosyltransferase family. Homodimer. Within each dimer, one monomer is responsible for RNA recognition and catalysis, while the other monomer binds to the replacement base PreQ1. Zn(2+) serves as cofactor.

The enzyme catalyses 7-aminomethyl-7-carbaguanine + guanosine(34) in tRNA = 7-aminomethyl-7-carbaguanosine(34) in tRNA + guanine. The protein operates within tRNA modification; tRNA-queuosine biosynthesis. Its function is as follows. Catalyzes the base-exchange of a guanine (G) residue with the queuine precursor 7-aminomethyl-7-deazaguanine (PreQ1) at position 34 (anticodon wobble position) in tRNAs with GU(N) anticodons (tRNA-Asp, -Asn, -His and -Tyr). Catalysis occurs through a double-displacement mechanism. The nucleophile active site attacks the C1' of nucleotide 34 to detach the guanine base from the RNA, forming a covalent enzyme-RNA intermediate. The proton acceptor active site deprotonates the incoming PreQ1, allowing a nucleophilic attack on the C1' of the ribose to form the product. After dissociation, two additional enzymatic reactions on the tRNA convert PreQ1 to queuine (Q), resulting in the hypermodified nucleoside queuosine (7-(((4,5-cis-dihydroxy-2-cyclopenten-1-yl)amino)methyl)-7-deazaguanosine). The chain is Queuine tRNA-ribosyltransferase from Shewanella denitrificans (strain OS217 / ATCC BAA-1090 / DSM 15013).